The primary structure comprises 371 residues: Flagellar P-ring protein (371 aa).

The signal sequence occupies residues 1-21 (MSRSFFATVLGLALAAMTVMA).

The protein belongs to the FlgI family. As to quaternary structure, the basal body constitutes a major portion of the flagellar organelle and consists of four rings (L,P,S, and M) mounted on a central rod.

It localises to the periplasm. The protein localises to the bacterial flagellum basal body. Assembles around the rod to form the L-ring and probably protects the motor/basal body from shearing forces during rotation. This chain is Flagellar P-ring protein, found in Caulobacter sp. (strain K31).